A 481-amino-acid chain; its full sequence is Glutamate mutase epsilon subunit (481 aa).

Arginine 67 contributes to the L-glutamate binding site. Residue glycine 69 coordinates adenosylcob(III)alamin. Arginine 99 provides a ligand contact to L-glutamate. Residue asparagine 122 coordinates adenosylcob(III)alamin. Residues 148–149 (RH), glutamate 170, and tyrosine 176 each bind L-glutamate. Proline 179 is an adenosylcob(III)alamin binding site. Tyrosine 180 provides a ligand contact to L-glutamate. Positions 296, 325, 329, and 333 each coordinate adenosylcob(III)alamin.

This sequence belongs to the methylaspartate mutase GlmE subunit family. As to quaternary structure, heterotetramer composed of 2 epsilon subunits (GlmE) and 2 sigma subunits (GlmS). GlmE exists as a homodimer and GlmS as a monomer. Adenosylcob(III)alamin is required as a cofactor.

It catalyses the reaction (2S,3S)-3-methyl-L-aspartate = L-glutamate. The protein operates within amino-acid degradation; L-glutamate degradation via mesaconate pathway; acetate and pyruvate from L-glutamate: step 1/4. Catalyzes the carbon skeleton rearrangement of L-glutamate to L-threo-3-methylaspartate ((2S,3S)-3-methylaspartate). This is Glutamate mutase epsilon subunit from Yersinia enterocolitica serotype O:8 / biotype 1B (strain NCTC 13174 / 8081).